The primary structure comprises 1217 residues: MIDVNKFESMQIGLASPNKIRSWSYGEVKKPETINYRTLKPEKDGLFDERIFGPTKDWSCACGKYKGVRYRGIVCDRCGVEVTSSKVRRERMGHIELAAPVTHIWYFKGIPSRMGLVLDISPKLLEEVIYFAAYIVIDPGDTDLEPKQLLTEAEYREQKAKYGNRFEAKMGAEAIRELLKKVDLDKEVKDLKKELQTATGQKRTRAIRRLDILDTFKNSGNKPEWMVMDAVPVIPPDLRPMVQLEGGRFATSDLNDLYRRVINRNNRLKRLLDLNAPNIIVQNEKRMLQEAVDALIDNGRRGRPVVGPGNRPLKSLSHMLKGKQGRFRQNLLGKRVDYSGRSVIDVSPKLKFYQCGVPRPMALELFKPFVMHELVKRGIASNIKNAKRKIDSEDDDIWDVLEDVIKERPVLLNRAPTLHRLSIQAFEPVLVPGKSIRLHPLACEAYNADFDGDQMAIHVPLSDEAVAESRLLMLAAHHILAPKDGKPIVTPSQDIVLGNYWLTQAERGREGEGMIFSSPAEATVAYENGDIHYHTIIGMSADAMPKKPWPQGHEHGIFITTYGKLVFNQLFPDDYFYINEPTEENLNNPLDAKYFLGEGQDIHDKIDEVGDDLIATPFKSSFLSDSIATIYKYYKVQRTSEYLDDLKKLGYTSSTTSGITIGMNDVPEIKDKDEKVAKARKQVDIVSKQFRRGLITEQERHDRVISIWNACKDEIQNEIAQIHSPRNPISIMADSGARGNISNFTQLAGMRGLMATPNGGLFEIPVTSNFKEGLSVLELFMSTHGARKGMTDTALKTAQSGYLTRRLVDVAQDVIIRDDDCGTDRGITVSAIMEGDEMIEPLFDRLVGRFTAETVKDPKTGEAIVGRDVMMDENMAHKICDAGVTHVKIRSILTCDTPHGVCRKCYGMNLATGEEVEVGEAVGTVAAQSIGEPGTQLTLRTFHNGGVAGAEDITQGLPRVQELFEARNPKGRATISEVDGVIDSIQENPADHTREITVKGKIDTRSYSVPYTASVAVSEGDYVHRGDKLTLGSVDPKELIQVTDTLTTEKYILAEVQKAYRMQGVDIADKHVEVLTRQMLQKVRVLDPGETDILPGEVMDIGQFRDRNKEVIISGGIPATAQSVILGITKAALETNSFLSAASFQETTRVLTDASIRGKNDPLLGLKENVIIGKIIPAGTGMPVYRNMEPEADVKKPDSVYSIGDIEKQMKEKEQSK.

Residues C60, C62, C75, and C78 each coordinate Zn(2+). Residues D449, D451, and D453 each coordinate Mg(2+). Zn(2+) contacts are provided by C821, C895, C902, and C905.

The protein belongs to the RNA polymerase beta' chain family. In terms of assembly, the RNAP catalytic core consists of 2 alpha, 1 beta, 1 beta' and 1 omega subunit. When a sigma factor is associated with the core the holoenzyme is formed, which can initiate transcription. The cofactor is Mg(2+). It depends on Zn(2+) as a cofactor.

It catalyses the reaction RNA(n) + a ribonucleoside 5'-triphosphate = RNA(n+1) + diphosphate. In terms of biological role, DNA-dependent RNA polymerase catalyzes the transcription of DNA into RNA using the four ribonucleoside triphosphates as substrates. This chain is DNA-directed RNA polymerase subunit beta', found in Lactobacillus helveticus (strain DPC 4571).